The chain runs to 128 residues: T-cell leukemia/lymphoma protein 1B (128 aa).

The protein belongs to the TCL1 family. In terms of assembly, interacts with AKT1 and AKT2 (via PH domain). Does not interact with AKT3. As to expression, expressed in a variety of tissues including placenta and testis.

Enhances the phosphorylation and activation of AKT1 and AKT2. The protein is T-cell leukemia/lymphoma protein 1B (TCL1B) of Homo sapiens (Human).